A 673-amino-acid polypeptide reads, in one-letter code: Leucine zipper putative tumor suppressor 3 (673 aa).

Disordered stretches follow at residues 1-157 (MAKL…CSEP), 172-239 (FHSM…QHLA), and 251-317 (IGTA…PPSP). The span at 79–92 (SRERPGRYPSEDKG) shows a compositional bias: basic and acidic residues. The segment covering 173–186 (HSMQNLCPPQTNGT) has biased composition (polar residues). Low complexity predominate over residues 215-235 (GLSDSGRNSLTSLPTYSSSYS). The segment covering 258-269 (SGSGGSSGGGSG) has biased composition (gly residues). Positions 274 to 294 (GTSDSGRASSKSGSSSSMGRP) are enriched in low complexity. A compositionally biased stretch (gly residues) spans 295 to 307 (GHLGSGEGGGGGL). Phosphoserine is present on residues Ser316 and Ser318. 2 coiled-coil regions span residues 317-496 (PSAL…SLRD) and 571-639 (RALR…RLRE). Residues 635–673 (RRLRERGAAGGASTPTPQHGEEKKAWTPSRLERIESTEI) form a disordered region. Residues 653–673 (HGEEKKAWTPSRLERIESTEI) are compositionally biased toward basic and acidic residues.

This sequence belongs to the LZTS3 family. As to quaternary structure, interacts (via C-terminus) with SHANK3 (via PDZ domain). Interacts (via coiled coil) with SIPA1L1. Can form homooligomers.

It localises to the synapse. The protein resides in the postsynaptic density. It is found in the cell projection. Its subcellular location is the dendritic spine. The protein localises to the dendrite. It localises to the cytoplasm. The protein resides in the cytoskeleton. Functionally, may be involved in promoting the maturation of dendritic spines, probably via regulating SIPA1L1 levels at the postsynaptic density of synapses. This Homo sapiens (Human) protein is Leucine zipper putative tumor suppressor 3.